The sequence spans 1062 residues: Inactive tyrosine-protein kinase 7 (1062 aa).

Positions 1–22 (MGARPLTLLRALLLPLLAGAQA) are cleaved as a signal peptide. 7 Ig-like C2-type domains span residues 23-112 (AIVF…ASFN), 120-210 (PVVL…FTLS), 217-309 (ARVV…EATL), 301-399 (PPIV…VNIT), 404-489 (PTWL…ARVQ), 495-578 (KFTP…HVQL), and 570-672 (GQIR…APLL). Residues 23–696 (AIVFIKEPSS…SPPPYKMIQT (674 aa)) are Extracellular-facing. A disulfide bridge connects residues Cys-45 and Cys-93. N-linked (GlcNAc...) asparagine glycans are attached at residues Asn-98, Asn-108, Asn-176, Asn-206, Asn-260, and Asn-275. The cysteines at positions 142 and 192 are disulfide-linked. 2 disulfides stabilise this stretch: Cys-238/Cys-293 and Cys-335/Cys-383. N-linked (GlcNAc...) asparagine glycans are attached at residues Asn-397, Asn-455, Asn-559, and Asn-638. 3 cysteine pairs are disulfide-bonded: Cys-425–Cys-473, Cys-516–Cys-562, and Cys-605–Cys-656. A helical membrane pass occupies residues 697–717 (IGLSVGAAVAYIIAVLGLMFY). The Cytoplasmic portion of the chain corresponds to 718 to 1062 (CKKRCKAKRL…LGDSPADSKQ (345 aa)). 2 disordered regions span residues 728–750 (QKQP…QNGQ) and 1039–1062 (NPKD…DSKQ). The segment at 786–1062 (ASLQPITTLG…LGDSPADSKQ (277 aa)) is interaction with CTNNB1. The Protein kinase; inactive domain occupies 788–1058 (LQPITTLGKS…IASTLGDSPA (271 aa)). Ser-1056 carries the post-translational modification Phosphoserine.

The protein belongs to the protein kinase superfamily. Tyr protein kinase family. Insulin receptor subfamily. In terms of assembly, interacts with CTNNB1. In terms of processing, MMP14 cleaves PTK7 between Pro-613 and Leu-614 generating an N-terminal soluble (70 kDa) fragment and a membrane C-terminal (50 kDa) fragment. Proteolysis by MMP14 regulates PTK7 function in non-canonical Wnt signaling pathway. Expressed at high levels in lung and un-pregnant uterus among adult tissues, and in the tail, limbs, somites, gut and craniofacial regions among embryonic tissues.

Its subcellular location is the membrane. The protein localises to the cell junction. Functionally, inactive tyrosine kinase involved in Wnt signaling pathway. Component of both the non-canonical (also known as the Wnt/planar cell polarity signaling) and the canonical Wnt signaling pathway. Functions in cell adhesion, cell migration, cell polarity, proliferation, actin cytoskeleton reorganization and apoptosis. Has a role in embryogenesis, epithelial tissue organization and angiogenesis. This is Inactive tyrosine-protein kinase 7 (Ptk7) from Mus musculus (Mouse).